A 559-amino-acid polypeptide reads, in one-letter code: Alpha-(1,6)-fucosyltransferase (559 aa).

Topologically, residues 1–4 are cytoplasmic; it reads MLKC. Residues 5–24 form a helical; Signal-anchor for type II membrane protein membrane-spanning segment; sequence IAAVGTVVWMTMFLFLYSQL. The Lumenal segment spans residues 25–559; that stretch reads SNNQSGGDSI…RKFKFEALLD (535 aa). N-linked (GlcNAc...) asparagine glycosylation is present at Asn-27. Residues 63-74 are compositionally biased toward basic and acidic residues; the sequence is QERNDQHKKIME. Positions 63 to 90 are disordered; it reads QERNDQHKKIMEQSHQLPPNPENPSLPK. Residues 80–90 show a composition bias toward pro residues; that stretch reads PPNPENPSLPK. Residue Asn-134 is glycosylated (N-linked (GlcNAc...) asparagine). 3 disulfide bridges follow: Cys-188/Cys-251, Cys-196/Cys-214, and Cys-202/Cys-206. The 291-residue stretch at 190–480 folds into the GT23 domain; the sequence is EAKTLVCNLD…ADDGSKFHSL (291 aa). Residues 351–352 are important for donor substrate binding; it reads RR. Cys-452 and Cys-459 are disulfide-bonded. Positions 489–550 constitute an SH3 domain; sequence QQAHEVIVIE…PSYKVVNDWR (62 aa).

This sequence belongs to the glycosyltransferase 23 family. Mn(2+) serves as cofactor. Mg(2+) is required as a cofactor.

The protein localises to the golgi apparatus. Its subcellular location is the golgi stack membrane. The enzyme catalyses N(4)-{beta-D-GlcNAc-(1-&gt;2)-alpha-D-Man-(1-&gt;3)-[beta-D-GlcNAc-(1-&gt;2)-alpha-D-Man-(1-&gt;6)]-beta-D-Man-(1-&gt;4)-beta-D-GlcNAc-(1-&gt;4)-beta-D-GlcNAc}-L-asparaginyl-[protein] + GDP-beta-L-fucose = an N(4)-{beta-D-GlcNAc-(1-&gt;2)-alpha-D-Man-(1-&gt;3)-[beta-D-GlcNAc-(1-&gt;2)-alpha-D-Man-(1-&gt;6)]-beta-D-Man-(1-&gt;4)-beta-D-GlcNAc-(1-&gt;4)-[alpha-L-Fuc-(1-&gt;6)]-beta-D-GlcNAc}-L-asparaginyl-[protein] + GDP + H(+). It participates in protein modification; protein glycosylation. With respect to regulation, inhibited by Fe(3+), Ni(2+) and Cu(2+). In terms of biological role, catalyzes the addition of fucose in alpha 1-6 linkage to the first GlcNAc residue, next to the peptide chains in N-glycans. The addition is prevented if the GlcNAc residue is already fucosylated. Involved in susceptibility to the nematotoxic C.cinerea galectin Cgl2, likely by contributing to the synthesis of core alpha-1,6-fucosylated N-glycans to which Cgl2 binds. The polypeptide is Alpha-(1,6)-fucosyltransferase (Caenorhabditis elegans).